The primary structure comprises 154 residues: 3-hydroxyacyl-[acyl-carrier-protein] dehydratase FabZ (154 aa).

Residue histidine 60 is part of the active site.

Belongs to the thioester dehydratase family. FabZ subfamily.

The protein localises to the cytoplasm. The enzyme catalyses a (3R)-hydroxyacyl-[ACP] = a (2E)-enoyl-[ACP] + H2O. In terms of biological role, involved in unsaturated fatty acids biosynthesis. Catalyzes the dehydration of short chain beta-hydroxyacyl-ACPs and long chain saturated and unsaturated beta-hydroxyacyl-ACPs. The chain is 3-hydroxyacyl-[acyl-carrier-protein] dehydratase FabZ from Haemophilus ducreyi (strain 35000HP / ATCC 700724).